A 98-amino-acid chain; its full sequence is Large ribosomal subunit protein bL21 (98 aa).

This sequence belongs to the bacterial ribosomal protein bL21 family. As to quaternary structure, part of the 50S ribosomal subunit. Contacts protein L20.

In terms of biological role, this protein binds to 23S rRNA in the presence of protein L20. The sequence is that of Large ribosomal subunit protein bL21 from Aquifex aeolicus (strain VF5).